The chain runs to 505 residues: RNA-splicing ligase RtcB homolog (505 aa).

4 residues coordinate Mn(2+): Asp119, Cys122, His227, and His259. 226-230 (NHYAE) contacts GMP. Ser300 carries the post-translational modification Phosphoserine. A Mn(2+)-binding site is contributed by His353. Residues 353 to 354 (HN), 402 to 405 (GGTM), Ser409, and 428 to 431 (HGAG) each bind GMP. The active-site GMP-histidine intermediate is His428. Residue Lys496 forms a Glycyl lysine isopeptide (Lys-Gly) (interchain with G-Cter in SUMO2) linkage. Lys504 contributes to the GMP binding site.

It belongs to the RtcB family. Catalytic component of the tRNA-splicing ligase complex. Mn(2+) serves as cofactor.

It localises to the nucleus. Its subcellular location is the cytoplasm. The catalysed reaction is a 3'-end 3'-phospho-ribonucleotide-RNA + a 5'-end dephospho-ribonucleoside-RNA + GTP = a ribonucleotidyl-ribonucleotide-RNA + GMP + diphosphate. It carries out the reaction a 3'-end 2',3'-cyclophospho-ribonucleotide-RNA + a 5'-end dephospho-ribonucleoside-RNA + GTP + H2O = a ribonucleotidyl-ribonucleotide-RNA + GMP + diphosphate + H(+). In terms of biological role, catalytic subunit of the tRNA-splicing ligase complex that acts by directly joining spliced tRNA halves to mature-sized tRNAs by incorporating the precursor-derived splice junction phosphate into the mature tRNA as a canonical 3',5'-phosphodiester. May act as an RNA ligase with broad substrate specificity, and may function toward other RNAs. The chain is RNA-splicing ligase RtcB homolog from Bos taurus (Bovine).